A 401-amino-acid polypeptide reads, in one-letter code: Probable tRNA sulfurtransferase (401 aa).

The region spanning 63-168 (TTAEQALSYL…EREAFLYGAR (106 aa)) is the THUMP domain. Residues 186 to 187 (LL), 211 to 212 (YF), arginine 268, glycine 290, and glutamine 299 each bind ATP.

This sequence belongs to the ThiI family.

The protein resides in the cytoplasm. It carries out the reaction [ThiI sulfur-carrier protein]-S-sulfanyl-L-cysteine + a uridine in tRNA + 2 reduced [2Fe-2S]-[ferredoxin] + ATP + H(+) = [ThiI sulfur-carrier protein]-L-cysteine + a 4-thiouridine in tRNA + 2 oxidized [2Fe-2S]-[ferredoxin] + AMP + diphosphate. It catalyses the reaction [ThiS sulfur-carrier protein]-C-terminal Gly-Gly-AMP + S-sulfanyl-L-cysteinyl-[cysteine desulfurase] + AH2 = [ThiS sulfur-carrier protein]-C-terminal-Gly-aminoethanethioate + L-cysteinyl-[cysteine desulfurase] + A + AMP + 2 H(+). The protein operates within cofactor biosynthesis; thiamine diphosphate biosynthesis. Functionally, catalyzes the ATP-dependent transfer of a sulfur to tRNA to produce 4-thiouridine in position 8 of tRNAs, which functions as a near-UV photosensor. Also catalyzes the transfer of sulfur to the sulfur carrier protein ThiS, forming ThiS-thiocarboxylate. This is a step in the synthesis of thiazole, in the thiamine biosynthesis pathway. The sulfur is donated as persulfide by IscS. This is Probable tRNA sulfurtransferase from Treponema pallidum (strain Nichols).